The sequence spans 1493 residues: Myosin-13 (1493 aa).

The Myosin N-terminal SH3-like domain maps to 18-67; it reads KVGSIVWVQDPEEAWIDGEVVEVNGEDIKVQCTSGKTVVAKGSNTYPKDM. The Myosin motor domain maps to 72-741; sequence SGVDDMTTLA…QMAELDDRRT (670 aa). Residues 166 to 173 and 219 to 227 each bind ATP; these read GESGAGKT and NNNSSRFGK. Actin-binding stretches follow at residues 504–538, 540–563, 598–622, and 622–644; these read LIEK…YETL, DNKY…AGDV, FPPL…KQQL, and LASL…KPNN. 6 IQ domains span residues 744 to 773, 767 to 796, 792 to 821, 813 to 842, 836 to 865, and 859 to 888; these read LGRA…AAIN, LRNA…EAAA, REAA…VTVQ, YIEA…ATTV, KTKA…AAIT, and LKKA…DARD. The stretch at 889–1057 forms a coiled coil; it reads TVVLQAAKSM…NFLKESVLTT (169 aa). Residues 1085–1114 are disordered; sequence QLSGAEFTTPPRIQESGSDTKSRGSHIDPQ. Basic and acidic residues predominate over residues 1102–1114; that stretch reads SDTKSRGSHIDPQ. One can recognise a Dilute domain in the interval 1161-1444; it reads DRLVQMIGSA…IASMTGVMTD (284 aa).

Belongs to the TRAFAC class myosin-kinesin ATPase superfamily. Myosin family. Plant myosin class XI subfamily. As to quaternary structure, homodimer.

Functionally, myosin heavy chain that is required for the cell cycle-regulated transport of various organelles and proteins for their segregation. Functions by binding with its tail domain to receptor proteins on organelles and exerting force with its N-terminal motor domain against actin filaments, thereby transporting its cargo along polarized actin cables. The chain is Myosin-13 (XI-G) from Arabidopsis thaliana (Mouse-ear cress).